A 374-amino-acid chain; its full sequence is Putative L-lysine 2,3-aminomutase aq_1632 (374 aa).

The Radical SAM core domain maps to 86-314; sequence HKYPDTALLL…ARVRYVMSHE (229 aa). [4Fe-4S] cluster is bound by residues cysteine 100, cysteine 104, and cysteine 107. Lysine 317 carries the N6-(pyridoxal phosphate)lysine modification.

Belongs to the radical SAM superfamily. KamA family. Requires [4Fe-4S] cluster as cofactor. It depends on pyridoxal 5'-phosphate as a cofactor.

The protein is Putative L-lysine 2,3-aminomutase aq_1632 of Aquifex aeolicus (strain VF5).